Consider the following 235-residue polypeptide: KNMITGAAQMDGAILVVSGADGPMPQTKEHILLAKQVGVPNIVVFLNKEDQVDDDELLELVELEVRDTLSSYEFPGDDIPVVPGSALLALEALTEKPAMSAGENKWVDKIFALMDAVDSYIPTPERDTAKTFLMAIEDVFSITGRGTVATGRVERGTVNCGDVVEIVGLGDTREVTVTGLEMFQKHLDESVAGDKVGVLLRGIQKDDIERGMVLAKKGTITPHTKFESQVYVLSK.

The 125-residue stretch at 1-125 (KNMITGAAQM…AVDSYIPTPE (125 aa)) folds into the tr-type G domain. 47 to 50 (NKED) is a GTP binding site.

The protein belongs to the TRAFAC class translation factor GTPase superfamily. Classic translation factor GTPase family. EF-Tu/EF-1A subfamily.

The protein resides in the plastid. Its subcellular location is the chloroplast. The enzyme catalyses GTP + H2O = GDP + phosphate + H(+). Functionally, GTP hydrolase that promotes the GTP-dependent binding of aminoacyl-tRNA to the A-site of ribosomes during protein biosynthesis. In Mantoniella squamata (Unicellular alga), this protein is Elongation factor Tu, chloroplastic (tufA).